A 364-amino-acid polypeptide reads, in one-letter code: MQNPKEKMDLSQFILSLIFIIAISATSFLIIQPFILGFSWASMIVIATWPLMLKMQKFLGGKRLVAVIGMIIILLLLFIIPIVFLVNSLIKTSIPLIHWFSSNNLEFPELIWLQDIPIIGKKIFISYQELLDSDGGELIREIRPYMGRTTEFFIIQAKNCGLFIMHLTLMLLFSLLLYWNGEKISNSIRQFASRLSSRNGEAIVLLSVQAVRAVALGVVVTALIQAVLSGIGLLISGVPYWTLLMILIVFSCLIQLGPLPILIPSVIWLYWNSNTTWGTLLLIWSCFVFILDNILRPFFIRIGSDLPTFLILLGVIGGLLAFGMIGLFIGPVVLVILYRLIVSWIYGISIASFLENTTLKSKSN.

9 consecutive transmembrane segments (helical) span residues Ile18–Phe38, Trp40–Gly60, Val65–Leu85, Gly161–Gly181, Ala215–Ile235, Leu243–Ile263, Leu280–Ile300, Phe309–Ile329, and Pro331–Ala351.

It belongs to the autoinducer-2 exporter (AI-2E) (TC 2.A.86) family.

It is found in the cell membrane. The polypeptide is Putative transport protein BUsg_115 (Buchnera aphidicola subsp. Schizaphis graminum (strain Sg)).